The sequence spans 287 residues: Ribosomal RNA small subunit methyltransferase A (287 aa).

Positions 28, 30, 55, 77, 103, and 123 each coordinate S-adenosyl-L-methionine.

It belongs to the class I-like SAM-binding methyltransferase superfamily. rRNA adenine N(6)-methyltransferase family. RsmA subfamily.

It localises to the cytoplasm. The catalysed reaction is adenosine(1518)/adenosine(1519) in 16S rRNA + 4 S-adenosyl-L-methionine = N(6)-dimethyladenosine(1518)/N(6)-dimethyladenosine(1519) in 16S rRNA + 4 S-adenosyl-L-homocysteine + 4 H(+). In terms of biological role, specifically dimethylates two adjacent adenosines (A1518 and A1519) in the loop of a conserved hairpin near the 3'-end of 16S rRNA in the 30S particle. May play a critical role in biogenesis of 30S subunits. This is Ribosomal RNA small subunit methyltransferase A from Rhodopseudomonas palustris (strain BisB5).